Reading from the N-terminus, the 331-residue chain is Adenosine deaminase (331 aa).

Zn(2+)-binding residues include H12 and H14. 3 residues coordinate substrate: H14, D16, and G170. Position 197 (H197) interacts with Zn(2+). E200 serves as the catalytic Proton donor. Zn(2+) is bound at residue D278. A substrate-binding site is contributed by D279.

This sequence belongs to the metallo-dependent hydrolases superfamily. Adenosine and AMP deaminases family. Adenosine deaminase subfamily. It depends on Zn(2+) as a cofactor.

The enzyme catalyses adenosine + H2O + H(+) = inosine + NH4(+). It carries out the reaction 2'-deoxyadenosine + H2O + H(+) = 2'-deoxyinosine + NH4(+). Functionally, catalyzes the hydrolytic deamination of adenosine and 2-deoxyadenosine. This is Adenosine deaminase from Shewanella baltica (strain OS155 / ATCC BAA-1091).